Consider the following 540-residue polypeptide: Probable ATP-dependent RNA helicase DDX28 (540 aa).

The Mitochondrial targeting signal motif lies at 3–18 (LAGPSRLLALAVRLLL). The short motif at 126-156 (GSFVDLGLEPRVLLALQEAVPEVVQPTSVQS) is the Q motif element. Residues 159-351 (IPPLLRGRHL…SKVTSPDSLT (193 aa)) form the Helicase ATP-binding domain. 172–179 (AETGSGKT) contributes to the ATP binding site. Positions 180–191 (LSYLLPLFQRLL) match the Nuclear export signal motif. The DEAD signature appears at 286 to 289 (DEVD). A Helicase C-terminal domain is found at 377 to 536 (KVTELVQILK…GLASSVGDPL (160 aa)). The Nuclear localization signal motif lies at 520 to 523 (RRRR).

Belongs to the DEAD box helicase family. In terms of assembly, monomer. Found in a complex with GRSF1, DHX30, FASTKD2 and FASTKD5. Associates with the 16S mitochondrial rRNA (16S mt-rRNA) and with the mitochondrial ribosome large subunit (39S).

It is found in the nucleus. The protein resides in the mitochondrion. The protein localises to the mitochondrion matrix. It localises to the mitochondrion nucleoid. It catalyses the reaction ATP + H2O = ADP + phosphate + H(+). Plays an essential role in facilitating the proper assembly of the mitochondrial large ribosomal subunit and its helicase activity is essential for this function. May be involved in RNA processing or transport. Has RNA and Mg(2+)-dependent ATPase activity. The chain is Probable ATP-dependent RNA helicase DDX28 (Ddx28) from Mus musculus (Mouse).